The chain runs to 309 residues: DSC E3 ubiquitin ligase complex subunit C (309 aa).

The N-linked (GlcNAc...) asparagine glycan is linked to Asn61. 2 disordered regions span residues Leu88–Lys110 and Glu148–Leu177. A run of 2 helical transmembrane segments spans residues Asp257–Leu277 and Gly289–Asn309.

It belongs to the dsc3 family. Component of the DSC E3 ubiquitin ligase complex composed of dscA, dscB, dscC and dscD.

The protein localises to the endoplasmic reticulum membrane. Its pathway is protein modification; protein ubiquitination. Component of the DSC E3 ubiquitin ligase complex which is required for the srbA transcriptional activator proteolytic cleavage to release the soluble transcription factor from the membrane in low oxygen or sterol conditions. Required for growth during hypoxia and triazole drug susceptibility, as well as for virulence in a murine model of invasive pulmonary aspergillosis (IPA). The polypeptide is DSC E3 ubiquitin ligase complex subunit C (Aspergillus fumigatus (strain CBS 144.89 / FGSC A1163 / CEA10) (Neosartorya fumigata)).